The primary structure comprises 194 residues: Leucyl/phenylalanyl-tRNA--protein transferase (194 aa).

The protein belongs to the L/F-transferase family.

It is found in the cytoplasm. The enzyme catalyses N-terminal L-lysyl-[protein] + L-leucyl-tRNA(Leu) = N-terminal L-leucyl-L-lysyl-[protein] + tRNA(Leu) + H(+). The catalysed reaction is N-terminal L-arginyl-[protein] + L-leucyl-tRNA(Leu) = N-terminal L-leucyl-L-arginyl-[protein] + tRNA(Leu) + H(+). It carries out the reaction L-phenylalanyl-tRNA(Phe) + an N-terminal L-alpha-aminoacyl-[protein] = an N-terminal L-phenylalanyl-L-alpha-aminoacyl-[protein] + tRNA(Phe). In terms of biological role, functions in the N-end rule pathway of protein degradation where it conjugates Leu, Phe and, less efficiently, Met from aminoacyl-tRNAs to the N-termini of proteins containing an N-terminal arginine or lysine. The polypeptide is Leucyl/phenylalanyl-tRNA--protein transferase (Chlorobium luteolum (strain DSM 273 / BCRC 81028 / 2530) (Pelodictyon luteolum)).